Here is a 313-residue protein sequence, read N- to C-terminus: Intelectin-1 (313 aa).

A signal peptide spans 1-18 (MNQLSFLLFLIATTRGWS). The 224-residue stretch at 32–255 (SSSPSLPRSC…AANALCAGMR (224 aa)) folds into the Fibrinogen C-terminal domain. Cysteines 41 and 70 form a disulfide. Residues histidine 86, glutamate 87, aspartate 89, glycine 92, glycine 97, aspartate 98, and aspartate 133 each contribute to the Ca(2+) site. 3 cysteine pairs are disulfide-bonded: cysteine 94/cysteine 280, cysteine 199/cysteine 259, and cysteine 251/cysteine 265. A glycan (N-linked (GlcNAc...) asparagine) is linked at asparagine 163. Ca(2+) contacts are provided by asparagine 260, glutamate 262, glutamate 274, and aspartate 282. A carbohydrate-binding positions include 262–263 (EH) and glutamate 274. Residue serine 298 is the site of GPI-anchor amidated serine attachment. Positions 299-313 (SSREITEAAVLLFYR) are excised as a propeptide.

In terms of assembly, homotrimer; disulfide-linked. May interact with LTF. N-glycosylated. In terms of tissue distribution, highly expressed in omental adipose tissue where it is found in stromal vascular cells but not in fat cells but is barely detectable in subcutaneous adipose tissue (at protein level). Highly expressed in the small intestine. Also found in the heart, testis, colon, salivary gland, skeletal muscle, pancreas and thyroid and, to a lesser degree, in the uterus, spleen, prostate, lymph node and thymus.

It localises to the cell membrane. The protein localises to the secreted. In terms of biological role, lectin that specifically recognizes microbial carbohydrate chains in a calcium-dependent manner. Binds to microbial glycans that contain a terminal acyclic 1,2-diol moiety, including beta-linked D-galactofuranose (beta-Galf), D-phosphoglycerol-modified glycans, D-glycero-D-talo-oct-2-ulosonic acid (KO) and 3-deoxy-D-manno-oct-2-ulosonic acid (KDO). Binds to glycans from Gram-positive and Gram-negative bacteria, including K.pneumoniae, S.pneumoniae, Y.pestis, P.mirabilis and P.vulgaris. Does not bind human glycans. Probably plays a role in the defense system against microorganisms. May function as adipokine that has no effect on basal glucose uptake but enhances insulin-stimulated glucose uptake in adipocytes. Increases AKT phosphorylation in the absence and presence of insulin. May interact with lactoferrin/LTF and increase its uptake, and may thereby play a role in iron absorption. The protein is Intelectin-1 (ITLN1) of Homo sapiens (Human).